We begin with the raw amino-acid sequence, 467 residues long: Mitogen-activated protein kinase kinase kinase 8 (467 aa).

T80 is modified (phosphothreonine). A phosphoserine mark is found at S138 and S141. ATP contacts are provided by residues 144–152 and K167; that span reads VPRGAFGKV. The Protein kinase domain maps to 146-388; sequence RGAFGKVYLA…AADLLKHEAL (243 aa). D253 serves as the catalytic Proton acceptor. T290 bears the Phosphothreonine mark. A phosphoserine mark is found at S400 and S443.

Belongs to the protein kinase superfamily. STE Ser/Thr protein kinase family. MAP kinase kinase kinase subfamily. In terms of assembly, forms a ternary complex with NFKB1/p105 and TNIP2. Interacts with NFKB1; the interaction increases the stability of MAP3K8 but inhibits its MEK phosphorylation activity, whereas loss of interaction following LPS stimulation leads to its degradation. Interacts with CD40 and TRAF6; the interaction is required for ERK activation. Interacts with KSR2; the interaction inhibits ERK and NF-kappa-B activation. The cofactor is Mg(2+). Autophosphorylated. Expressed in spleen, thymus, liver and lung.

Its subcellular location is the cytoplasm. The catalysed reaction is L-seryl-[protein] + ATP = O-phospho-L-seryl-[protein] + ADP + H(+). It carries out the reaction L-threonyl-[protein] + ATP = O-phospho-L-threonyl-[protein] + ADP + H(+). Functionally, required for lipopolysaccharide (LPS)-induced, TLR4-mediated activation of the MAPK/ERK pathway in macrophages, thus being critical for production of the pro-inflammatory cytokine TNF-alpha (TNF) during immune responses. Involved in the regulation of T-helper cell differentiation and IFNG expression in T-cells. Involved in mediating host resistance to bacterial infection through negative regulation of type I interferon (IFN) production. Transduces CD40 and TNFRSF1A signals that activate ERK in B-cells and macrophages, and thus may play a role in the regulation of immunoglobulin production. May also play a role in the transduction of TNF signals that activate JNK and NF-kappa-B in some cell types. In adipocytes, activates MAPK/ERK pathway in an IKBKB-dependent manner in response to IL1B and TNF, but not insulin, leading to induction of lipolysis. Plays a role in the cell cycle. The sequence is that of Mitogen-activated protein kinase kinase kinase 8 (Map3k8) from Rattus norvegicus (Rat).